Here is a 506-residue protein sequence, read N- to C-terminus: D-alanine--D-alanyl carrier protein ligase (506 aa).

152–153 serves as a coordination point for ATP; the sequence is TS. Residue D197 participates in D-alanine binding. Position 292 to 297 (292 to 297) interacts with ATP; that stretch reads NTYGPT. D-alanine is bound at residue V301. Residues D383, 395–398, and K494 each bind ATP; that span reads YRGR. Position 494 (K494) interacts with D-alanine.

This sequence belongs to the ATP-dependent AMP-binding enzyme family. DltA subfamily.

The protein localises to the cytoplasm. The enzyme catalyses holo-[D-alanyl-carrier protein] + D-alanine + ATP = D-alanyl-[D-alanyl-carrier protein] + AMP + diphosphate. It functions in the pathway cell wall biogenesis; lipoteichoic acid biosynthesis. Its function is as follows. Catalyzes the first step in the D-alanylation of lipoteichoic acid (LTA), the activation of D-alanine and its transfer onto the D-alanyl carrier protein (Dcp) DltC. In an ATP-dependent two-step reaction, forms a high energy D-alanyl-AMP intermediate, followed by transfer of the D-alanyl residue as a thiol ester to the phosphopantheinyl prosthetic group of the Dcp. D-alanylation of LTA plays an important role in modulating the properties of the cell wall in Gram-positive bacteria, influencing the net charge of the cell wall. The protein is D-alanine--D-alanyl carrier protein ligase of Lacticaseibacillus rhamnosus (Lactobacillus rhamnosus).